The primary structure comprises 63 residues: DNA-directed RNA polymerase 7 kDa subunit (63 aa).

It belongs to the poxviridae DNA-directed RNA polymerase 7 kDa subunit family. In terms of assembly, the DNA-dependent RNA polymerase used for intermediate and late genes expression consists of eight subunits 147 kDa, 133 kDa, 35 kDa, 30 kDa, 22 kDa, 19 kDa, 18 kDa and 7 kDa totalling more than 500 kDa in mass. The same holoenzyme, with the addition of the transcription-specificity factor RAP94, is used for early gene expression.

Its subcellular location is the virion. It carries out the reaction RNA(n) + a ribonucleoside 5'-triphosphate = RNA(n+1) + diphosphate. In terms of biological role, part of the DNA-dependent RNA polymerase which catalyzes the transcription of viral DNA into RNA using the four ribonucleoside triphosphates as substrates. Responsible for the transcription of early, intermediate and late genes. DNA-dependent RNA polymerase associates with the early transcription factor (ETF) thereby allowing the early genes transcription. Late transcription, and probably also intermediate transcription, require newly synthesized RNA polymerase. The protein is DNA-directed RNA polymerase 7 kDa subunit (RPO7) of Rabbit fibroma virus (strain Kasza) (RFV).